The chain runs to 193 residues: Imidazoleglycerol-phosphate dehydratase (193 aa).

This sequence belongs to the imidazoleglycerol-phosphate dehydratase family.

The protein resides in the cytoplasm. It catalyses the reaction D-erythro-1-(imidazol-4-yl)glycerol 3-phosphate = 3-(imidazol-4-yl)-2-oxopropyl phosphate + H2O. The protein operates within amino-acid biosynthesis; L-histidine biosynthesis; L-histidine from 5-phospho-alpha-D-ribose 1-diphosphate: step 6/9. The sequence is that of Imidazoleglycerol-phosphate dehydratase from Saccharolobus islandicus (strain Y.G.57.14 / Yellowstone #1) (Sulfolobus islandicus).